We begin with the raw amino-acid sequence, 341 residues long: MNHIPMQNKKVTVSVIGASGYSGAELVKLLMKHPGIVIEELYAHTQAGKRFTELYPSIPCDKTFQTYAGQTNSDVYLLALPHGEALQLVPGIVAAGKKVIDLSGDFRLKNTAEHKRFYGGDKSAEDVLQYGMPELFRDEIAGSTAISNPGCYATSIILGLAPLFLGGMAGLDVESVNVTAVSGISGAGRSAKLELSFSEMSGNMRAYKVGKHQHTPEIMQTLGTSVTDPSFRFVFTPMIAPYVRGIYSVLNVRLASPVAMEPVRELYAGFYANAPFVRLRDGVTEVSHVAYTNFCDISLAFESDGSLVIITAIDNLVKGAAGQAVQNMNLMLGFGETTALL.

The active site involves Cys151.

Belongs to the NAGSA dehydrogenase family. Type 1 subfamily.

The protein localises to the cytoplasm. The enzyme catalyses N-acetyl-L-glutamate 5-semialdehyde + phosphate + NADP(+) = N-acetyl-L-glutamyl 5-phosphate + NADPH + H(+). The protein operates within amino-acid biosynthesis; L-arginine biosynthesis; N(2)-acetyl-L-ornithine from L-glutamate: step 3/4. Functionally, catalyzes the NADPH-dependent reduction of N-acetyl-5-glutamyl phosphate to yield N-acetyl-L-glutamate 5-semialdehyde. This is N-acetyl-gamma-glutamyl-phosphate reductase from Chlorobaculum tepidum (strain ATCC 49652 / DSM 12025 / NBRC 103806 / TLS) (Chlorobium tepidum).